The primary structure comprises 228 residues: Max-interacting protein 1 (228 aa).

Disordered stretches follow at residues 30–76 and 160–228; these read YASS…NELE and SIGS…SFAS. Over residues 43–56 the composition is skewed to basic residues; sequence QHSKPPRRLSRAQK. Polar residues predominate over residues 57 to 70; the sequence is HSSGSSNTSTANRS. One can recognise a bHLH domain in the interval 67–119; sequence ANRSTHNELEKNRRAHLRLCLERLKVLIPLGPDCTRHTTLGLLNKAKAHIKKL. A compositionally biased stretch (acidic residues) spans 173–183; the sequence is EREEIEVDVES. The span at 207 to 228 shows a compositional bias: polar residues; the sequence is SLQSVGSDEGYSSASVKLSFAS.

As to quaternary structure, efficient DNA binding requires dimerization with another bHLH protein. Binds DNA as a heterodimer with MAX. Interacts with SMC3. Interacts with RNF17.

The protein localises to the nucleus. Transcriptional repressor. MXI1 binds with MAX to form a sequence-specific DNA-binding protein complex which recognizes the core sequence 5'-CAC[GA]TG-3'. MXI1 thus antagonizes MYC transcriptional activity by competing for MAX. Isoform Short, which lacks a segment, has a much stronger suppressive potential and associates with a SIN3 homologous protein. This Mus musculus (Mouse) protein is Max-interacting protein 1 (Mxi1).